Reading from the N-terminus, the 486-residue chain is Zinc finger chaperone ZPR1 (486 aa).

A disordered region spans residues 1–31 (MSEQKEDLFKPVGEAAAEVEDESIAEQNKAN). Ser-23 carries the post-translational modification Phosphoserine. C4-type zinc fingers lie at residues 54 to 86 (CMNC…CPHC) and 295 to 327 (CPSC…CDHC). Thr-407 bears the Phosphothreonine mark.

This sequence belongs to the ZPR1 family. Interacts with elongation factor 1-alpha.

It is found in the cytoplasm. It localises to the nucleus. Functionally, acts as a protein folding chaperone for elongation factor 1-alpha. The chain is Zinc finger chaperone ZPR1 from Saccharomyces cerevisiae (strain ATCC 204508 / S288c) (Baker's yeast).